The sequence spans 20 residues: Protein PR-L3 (20 aa).

It belongs to the BetVI family.

The protein is Protein PR-L3 of Lupinus luteus (European yellow lupine).